Consider the following 176-residue polypeptide: ATP synthase subunit delta (176 aa).

This sequence belongs to the ATPase delta chain family. As to quaternary structure, F-type ATPases have 2 components, F(1) - the catalytic core - and F(0) - the membrane proton channel. F(1) has five subunits: alpha(3), beta(3), gamma(1), delta(1), epsilon(1). F(0) has three main subunits: a(1), b(2) and c(10-14). The alpha and beta chains form an alternating ring which encloses part of the gamma chain. F(1) is attached to F(0) by a central stalk formed by the gamma and epsilon chains, while a peripheral stalk is formed by the delta and b chains.

It localises to the cell inner membrane. In terms of biological role, f(1)F(0) ATP synthase produces ATP from ADP in the presence of a proton or sodium gradient. F-type ATPases consist of two structural domains, F(1) containing the extramembraneous catalytic core and F(0) containing the membrane proton channel, linked together by a central stalk and a peripheral stalk. During catalysis, ATP synthesis in the catalytic domain of F(1) is coupled via a rotary mechanism of the central stalk subunits to proton translocation. This protein is part of the stalk that links CF(0) to CF(1). It either transmits conformational changes from CF(0) to CF(1) or is implicated in proton conduction. The chain is ATP synthase subunit delta from Campylobacter curvus (strain 525.92).